Consider the following 269-residue polypeptide: Ribosomal RNA small subunit methyltransferase J (269 aa).

Residues 125 to 126 and D179 contribute to the S-adenosyl-L-methionine site; that span reads ER.

This sequence belongs to the methyltransferase superfamily. RsmJ family.

Its subcellular location is the cytoplasm. It carries out the reaction guanosine(1516) in 16S rRNA + S-adenosyl-L-methionine = N(2)-methylguanosine(1516) in 16S rRNA + S-adenosyl-L-homocysteine + H(+). Functionally, specifically methylates the guanosine in position 1516 of 16S rRNA. The polypeptide is Ribosomal RNA small subunit methyltransferase J (Pseudomonas syringae pv. syringae (strain B728a)).